Reading from the N-terminus, the 171-residue chain is Cyclin-dependent kinase inhibitor 2A (171 aa).

Basic and acidic residues predominate over residues 33–42 (ASMHTKHESE). The disordered stretch occupies residues 33–52 (ASMHTKHESEESFSGEKLTE). ANK repeat units follow at residues 45 to 74 (FSGE…NPNA), 78 to 106 (FGRS…EPNT), and 111 to 140 (TLTL…RLDV).

Belongs to the CDKN2 cyclin-dependent kinase inhibitor family. In terms of assembly, heterodimer with CDK4 or CDK6. Predominamt P16 complexes contained CDK6. Interacts with CDK4 (both 'T-172'-phosphorylated and non-phosphorylated forms); the interaction inhibits cyclin D-CDK4 kinase activity. Interacts with ISCO2. In terms of tissue distribution, expressed predominantly in lung and testis. In the testis, restricted to germ cells in the seminiferous epithelium. Not detected in premeiotic spermatogonia but high levels found in postmeiotic spermatids. In primary tumors, low levels detected in melanocytic hyperplasias. Higher levels found in non-metastatic and metastatic melanomas.

It localises to the cytoplasm. The protein localises to the nucleus. In terms of biological role, acts as a negative regulator of the proliferation of normal cells by interacting strongly with CDK4 and CDK6. This inhibits their ability to interact with cyclins D and to phosphorylate the retinoblastoma protein. The polypeptide is Cyclin-dependent kinase inhibitor 2A (Monodelphis domestica (Gray short-tailed opossum)).